Consider the following 1343-residue polypeptide: Spermatogenesis-associated protein 31A6 (1343 aa).

Residues Pro-23 to Leu-43 form a helical membrane-spanning segment. 6 disordered regions span residues Pro-55–Pro-88, Gly-106–Ile-235, Asp-624–Lys-654, Pro-895–Val-951, Val-1080–Val-1156, and Lys-1309–His-1331. Residues Gly-60–Arg-82 are compositionally biased toward basic residues. The segment covering Leu-165 to Val-178 has biased composition (polar residues). The segment covering Pro-198–Lys-222 has biased composition (pro residues). Composition is skewed to polar residues over residues Pro-627–Glu-647 and Leu-923–Ala-944. Basic and acidic residues-rich tracts occupy residues His-1104–Gly-1123 and Arg-1133–Glu-1142.

This sequence belongs to the SPATA31 family.

The protein localises to the membrane. Functionally, may play a role in spermatogenesis. This chain is Spermatogenesis-associated protein 31A6 (SPATA31A6), found in Homo sapiens (Human).